Here is a 137-residue protein sequence, read N- to C-terminus: DNA-binding protein H-NS (137 aa).

A DNA-binding region spans residues 112–117 (QGRTPA).

The protein belongs to the histone-like protein H-NS family. As to quaternary structure, homodimer that oligomerizes on DNA into higher-order complexes that form bridges between disparate regions of DNA compacting it. Interacts with Hha, YdgT and StpA.

It localises to the cytoplasm. It is found in the nucleoid. Functionally, a DNA-binding protein implicated in transcriptional repression and chromosome organization and compaction. Binds nucleation sites in AT-rich DNA and bridges them, forming higher-order nucleoprotein complexes and condensing the chromosome. As many horizontally transferred genes are AT-rich, it plays a central role in silencing foreign genes. A subset of genes are repressed by H-NS in association with other proteins. The chain is DNA-binding protein H-NS (hns) from Salmonella paratyphi A (strain ATCC 9150 / SARB42).